Reading from the N-terminus, the 158-residue chain is Putative cTAGE family member 3 (158 aa).

Residues 26 to 96 (QLQESQKQLL…AAVLEEDITD (71 aa)) adopt a coiled-coil conformation.

It belongs to the cTAGE family. As to expression, expressed in normal tissues including colon, mammary gland, ovary, placenta, stomach and testis, as well as several fetal tissues.

Functionally, tumor-associated antigen. In Homo sapiens (Human), this protein is Putative cTAGE family member 3 (CTAGE3P).